The sequence spans 285 residues: Phospholipid phosphatase 1 (285 aa).

Over 1 to 6 (MFDKTR) the chain is Cytoplasmic. Positions 5-7 (TRL) match the PDZ-binding; involved in localization to the apical cell membrane motif. A helical membrane pass occupies residues 7–27 (LPYVALDVLCVLLAGLPFAIL). Residues 28–53 (TSRHTPFQRGLFCNDESIKYPYKEDT) lie on the Extracellular side of the membrane. Residues 54–74 (IPYPLLGGIIIPFSIIVMIVG) form a helical membrane-spanning segment. The Cytoplasmic segment spans residues 75–94 (ETLSVYFNLLHSNSFIRNNY). Residues 95 to 115 (IATIYKAIGTFLFGAAASQSL) traverse the membrane as a helical segment. Topologically, residues 116–164 (TDIAKYSIGRLRPHFLDVCDPDWSKINCSDGYIENYICRGNAQKVKEGR) are extracellular. Residues 120–128 (KYSIGRLRP) are phosphatase sequence motif I. A glycan (N-linked (GlcNAc...) asparagine) is linked at Asn-142. Residues 165-185 (LSFYSGHSSFSMYCMLFVALY) form a helical membrane-spanning segment. The phosphatase sequence motif II stretch occupies residues 168-171 (YSGH). Catalysis depends on His-171, which acts as the Proton donors. Topologically, residues 186 to 196 (LQARMKGDWAR) are cytoplasmic. A helical membrane pass occupies residues 197-216 (LLRPTLQFGLVAVSIYVGLS). Positions 216-227 (SRVSDYKHHWSD) are phosphatase sequence motif III. Residues 217-229 (RVSDYKHHWSDVL) lie on the Extracellular side of the membrane. His-223 functions as the Nucleophile in the catalytic mechanism. A helical transmembrane segment spans residues 230–250 (TGLIQGALVAIVVAVYVSDFF). The Cytoplasmic segment spans residues 251–285 (KERNSPFKERKEEDSHTTLHETPTTGNHYRNSHQP). The segment covering 257–269 (FKERKEEDSHTTL) has biased composition (basic and acidic residues). The segment at 257–285 (FKERKEEDSHTTLHETPTTGNHYRNSHQP) is disordered. Residues 270–285 (HETPTTGNHYRNSHQP) show a composition bias toward polar residues.

Belongs to the PA-phosphatase related phosphoesterase family. As to quaternary structure, forms functional homodimers and homooligomers that are not required for substrate recognition and catalytic activity. Can also form heterooligomers with PLPP2 and PLPP3. N-glycosylated. N-linked sugars are of the complex type. N-glycosylation is not required for the phosphatase activity.

It is found in the cell membrane. The protein localises to the apical cell membrane. The protein resides in the membrane raft. Its subcellular location is the membrane. It localises to the caveola. It catalyses the reaction a 1,2-diacyl-sn-glycero-3-phosphate + H2O = a 1,2-diacyl-sn-glycerol + phosphate. It carries out the reaction 1,2-dihexadecanoyl-sn-glycero-3-phosphate + H2O = 1,2-dihexadecanoyl-sn-glycerol + phosphate. The enzyme catalyses 1,2-di-(9Z-octadecenoyl)-sn-glycero-3-phosphate + H2O = 1,2-di-(9Z-octadecenoyl)-sn-glycerol + phosphate. The catalysed reaction is a monoacyl-sn-glycero-3-phosphate + H2O = a monoacylglycerol + phosphate. It catalyses the reaction (9Z)-octadecenoyl-sn-glycero-3-phosphate + H2O = (9Z-octadecenoyl)-glycerol + phosphate. It carries out the reaction a 1-acyl-sn-glycero-3-phosphate + H2O = a 1-acyl-sn-glycerol + phosphate. The enzyme catalyses 1-(9Z-octadecenoyl)-sn-glycero-3-phosphate + H2O = 1-(9Z-octadecenoyl)-sn-glycerol + phosphate. The catalysed reaction is a 1,2-diacyl-sn-glycerol 3-diphosphate + H2O = a 1,2-diacyl-sn-glycero-3-phosphate + phosphate + H(+). It catalyses the reaction sphing-4-enine 1-phosphate + H2O = sphing-4-enine + phosphate. It carries out the reaction an N-acylsphing-4-enine 1-phosphate + H2O = an N-acylsphing-4-enine + phosphate. The enzyme catalyses N-(octanoyl)-sphing-4-enine-1-phosphate + H2O = N-octanoylsphing-4-enine + phosphate. The catalysed reaction is N-(9Z-octadecenoyl)-ethanolamine phosphate + H2O = N-(9Z-octadecenoyl) ethanolamine + phosphate. It catalyses the reaction 1-hexadecanoyl-2-(9Z-octadecenoyl)-sn-glycero-3-phosphate + H2O = 1-hexadecanoyl-2-(9Z-octadecenoyl)-sn-glycerol + phosphate. The protein operates within lipid metabolism; phospholipid metabolism. Magnesium-independent phospholipid phosphatase. Insensitive to N-ethylmaleimide. Magnesium-independent phospholipid phosphatase of the plasma membrane that catalyzes the dephosphorylation of a variety of glycerolipid and sphingolipid phosphate esters including phosphatidate/PA, lysophosphatidate/LPA, diacylglycerol pyrophosphate/DGPP, sphingosine 1-phosphate/S1P and ceramide 1-phosphate/C1P. Also acts on N-oleoyl ethanolamine phosphate/N-(9Z-octadecenoyl)-ethanolamine phosphate, a potential physiological compound. Through its extracellular phosphatase activity allows both the hydrolysis and the cellular uptake of these bioactive lipid mediators from the milieu, regulating signal transduction in different cellular processes. It is for instance essential for the extracellular hydrolysis of S1P and subsequent conversion into intracellular S1P. Involved in the regulation of inflammation, platelets activation, cell proliferation and migration among other processes. May also have an intracellular activity to regulate phospholipid-mediated signaling pathways. The polypeptide is Phospholipid phosphatase 1 (Sus scrofa (Pig)).